The sequence spans 308 residues: Cell division protein FtsQ (308 aa).

Residues Met-1–Ala-28 are disordered. At Met-1–Arg-46 the chain is on the cytoplasmic side. Residues Pro-18–Ala-28 are compositionally biased toward basic and acidic residues. A helical membrane pass occupies residues Thr-47–Ala-67. The Periplasmic portion of the chain corresponds to Ser-68 to Leu-308. Residues Phe-92–Arg-160 form the POTRA domain.

It belongs to the FtsQ/DivIB family. FtsQ subfamily.

The protein resides in the cell inner membrane. Essential cell division protein. In Cereibacter sphaeroides (strain ATCC 17023 / DSM 158 / JCM 6121 / CCUG 31486 / LMG 2827 / NBRC 12203 / NCIMB 8253 / ATH 2.4.1.) (Rhodobacter sphaeroides), this protein is Cell division protein FtsQ.